Here is a 214-residue protein sequence, read N- to C-terminus: Transmembrane emp24 domain-containing protein p24beta3 (214 aa).

The signal sequence occupies residues 1-27 (MERRQAKIHVFVLIGLILLNSINQISS). Over 28-178 (LSVTVNDEEC…RHTNESTRKR (151 aa)) the chain is Lumenal. Residues 35–122 (EECVQEYVLY…PETVSFYIHV (88 aa)) form the GOLD domain. The stretch at 140–158 (VNVKIAELREALESVVAEQ) forms a coiled coil. Residues arginine 164 and arginine 169 each carry the omega-N-methylated arginine modification. Asparagine 172 is a glycosylation site (N-linked (GlcNAc...) asparagine). Residues 179-199 (VIFYTVGEYIFLAAASGLQVL) form a helical membrane-spanning segment. The Cytoplasmic portion of the chain corresponds to 200-214 (YIRKLFSKSVAYNRV). A COPII vesicle coat-binding motif is present at residues 204–205 (LF). The COPI vesicle coat-binding motif lies at 204–214 (LFSKSVAYNRV). Residues 213–214 (RV) carry the Required for the export from the endoplasmic reticulum to the Golgi motif.

Belongs to the EMP24/GP25L family. In terms of assembly, probably oligomerizes with other members of the EMP24/GP25L family. Associates with the COPI vesicle coat (coatomer). Associates with the COPII vesicle coat (coatomer).

The protein resides in the golgi apparatus. The protein localises to the cis-Golgi network membrane. It is found in the golgi stack membrane. In terms of biological role, involved in vesicular protein trafficking. Mainly functions in the early secretory pathway but also in post-Golgi membranes. Thought to act as cargo receptor at the lumenal side for incorporation of secretory cargo molecules into transport vesicles and to be involved in vesicle coat formation at the cytoplasmic side. The sequence is that of Transmembrane emp24 domain-containing protein p24beta3 from Arabidopsis thaliana (Mouse-ear cress).